Reading from the N-terminus, the 90-residue chain is DNA-directed RNA polymerase subunit omega (90 aa).

Belongs to the RNA polymerase subunit omega family. As to quaternary structure, the RNAP catalytic core consists of 2 alpha, 1 beta, 1 beta' and 1 omega subunit. When a sigma factor is associated with the core the holoenzyme is formed, which can initiate transcription.

It carries out the reaction RNA(n) + a ribonucleoside 5'-triphosphate = RNA(n+1) + diphosphate. Its function is as follows. Promotes RNA polymerase assembly. Latches the N- and C-terminal regions of the beta' subunit thereby facilitating its interaction with the beta and alpha subunits. The chain is DNA-directed RNA polymerase subunit omega from Beutenbergia cavernae (strain ATCC BAA-8 / DSM 12333 / CCUG 43141 / JCM 11478 / NBRC 16432 / NCIMB 13614 / HKI 0122).